Consider the following 929-residue polypeptide: Isoleucine--tRNA ligase (929 aa).

Residues 58–68 (PYANGDIHIGH) carry the 'HIGH' region motif. An L-isoleucyl-5'-AMP-binding site is contributed by Glu563. The 'KMSKS' region motif lies at 605-609 (KMSKS). An ATP-binding site is contributed by Lys608. Positions 892, 895, 912, and 915 each coordinate Zn(2+).

Belongs to the class-I aminoacyl-tRNA synthetase family. IleS type 1 subfamily. Monomer. Zn(2+) serves as cofactor.

It localises to the cytoplasm. The catalysed reaction is tRNA(Ile) + L-isoleucine + ATP = L-isoleucyl-tRNA(Ile) + AMP + diphosphate. Its function is as follows. Catalyzes the attachment of isoleucine to tRNA(Ile). As IleRS can inadvertently accommodate and process structurally similar amino acids such as valine, to avoid such errors it has two additional distinct tRNA(Ile)-dependent editing activities. One activity is designated as 'pretransfer' editing and involves the hydrolysis of activated Val-AMP. The other activity is designated 'posttransfer' editing and involves deacylation of mischarged Val-tRNA(Ile). This chain is Isoleucine--tRNA ligase, found in Neisseria meningitidis serogroup C (strain 053442).